The primary structure comprises 250 residues: Cobalt transport protein CbiM (250 aa).

Residues 1–25 form the signal peptide; it reads MKQNIKLGVIAALMLIVLTPVTSNA. Transmembrane regions (helical) follow at residues 33–53, 68–88, 100–120, 132–152, 163–183, and 205–225; these read LPVKWSIAWGVIFIPFFLVGL, VLLALCGAFVFVLSALKIPSV, LGAIMFGPSVMFVLGTIVLIF, TLGANAFSMAIIGPIISFLIF, AMPVFLAAAIGDLATYTVTSI, and GIFFMTQIPIAIAEGILTVIV.

The protein belongs to the CbiM family. Forms an energy-coupling factor (ECF) transporter complex composed of an ATP-binding protein (A component, CbiO), a transmembrane protein (T component, CbiQ) and 2 possible substrate-capture proteins (S components, CbiM and CbiN) of unknown stoichimetry.

The protein resides in the cell membrane. Its pathway is cofactor biosynthesis; adenosylcobalamin biosynthesis. Part of the energy-coupling factor (ECF) transporter complex CbiMNOQ involved in cobalt import. The sequence is that of Cobalt transport protein CbiM from Clostridioides difficile (strain R20291) (Peptoclostridium difficile).